Here is a 280-residue protein sequence, read N- to C-terminus: Formamidopyrimidine-DNA glycosylase (280 aa).

Catalysis depends on Pro-2, which acts as the Schiff-base intermediate with DNA. Residue Glu-3 is the Proton donor of the active site. Lys-58 serves as the catalytic Proton donor; for beta-elimination activity. His-91, Arg-110, and Arg-152 together coordinate DNA. The FPG-type zinc-finger motif lies at 237 to 271 (NVYGRENLPCPQCDSAIEKVVLNQRAAYFCSNCQK). The active-site Proton donor; for delta-elimination activity is Arg-261.

Belongs to the FPG family. Monomer. It depends on Zn(2+) as a cofactor.

The enzyme catalyses Hydrolysis of DNA containing ring-opened 7-methylguanine residues, releasing 2,6-diamino-4-hydroxy-5-(N-methyl)formamidopyrimidine.. It carries out the reaction 2'-deoxyribonucleotide-(2'-deoxyribose 5'-phosphate)-2'-deoxyribonucleotide-DNA = a 3'-end 2'-deoxyribonucleotide-(2,3-dehydro-2,3-deoxyribose 5'-phosphate)-DNA + a 5'-end 5'-phospho-2'-deoxyribonucleoside-DNA + H(+). Involved in base excision repair of DNA damaged by oxidation or by mutagenic agents. Acts as a DNA glycosylase that recognizes and removes damaged bases. Has a preference for oxidized purines, such as 7,8-dihydro-8-oxoguanine (8-oxoG). Has AP (apurinic/apyrimidinic) lyase activity and introduces nicks in the DNA strand. Cleaves the DNA backbone by beta-delta elimination to generate a single-strand break at the site of the removed base with both 3'- and 5'-phosphates. The sequence is that of Formamidopyrimidine-DNA glycosylase from Hydrogenovibrio crunogenus (strain DSM 25203 / XCL-2) (Thiomicrospira crunogena).